The primary structure comprises 128 residues: Transcription antitermination protein NusB (128 aa).

Belongs to the NusB family.

In terms of biological role, involved in transcription antitermination. Required for transcription of ribosomal RNA (rRNA) genes. Binds specifically to the boxA antiterminator sequence of the ribosomal RNA (rrn) operons. The polypeptide is Transcription antitermination protein NusB (Listeria innocua serovar 6a (strain ATCC BAA-680 / CLIP 11262)).